The chain runs to 546 residues: Glucose-6-phosphate isomerase (546 aa).

The Proton donor role is filled by Glu-356. Residues His-387 and Lys-507 contribute to the active site.

Belongs to the GPI family.

The protein resides in the cytoplasm. It carries out the reaction alpha-D-glucose 6-phosphate = beta-D-fructose 6-phosphate. It participates in carbohydrate biosynthesis; gluconeogenesis. Its pathway is carbohydrate degradation; glycolysis; D-glyceraldehyde 3-phosphate and glycerone phosphate from D-glucose: step 2/4. Catalyzes the reversible isomerization of glucose-6-phosphate to fructose-6-phosphate. In Syntrophus aciditrophicus (strain SB), this protein is Glucose-6-phosphate isomerase.